Consider the following 845-residue polypeptide: Beta-mannosidase B (845 aa).

Glu432 (proton donor) is an active-site residue. Residues Asn717 and Asn723 are each glycosylated (N-linked (GlcNAc...) asparagine).

The protein belongs to the glycosyl hydrolase 2 family. Beta-mannosidase B subfamily.

The catalysed reaction is Hydrolysis of terminal, non-reducing beta-D-mannose residues in beta-D-mannosides.. It functions in the pathway glycan metabolism; N-glycan degradation. Its function is as follows. Exoglycosidase that cleaves the single beta-linked mannose residue from the non-reducing end of beta-mannosidic oligosaccharides of various complexity and length. Prefers mannobiose over mannotriose and has no activity against polymeric mannan. Is also severely restricted by galactosyl substitutions at the +1 subsite. The polypeptide is Beta-mannosidase B (mndB) (Aspergillus clavatus (strain ATCC 1007 / CBS 513.65 / DSM 816 / NCTC 3887 / NRRL 1 / QM 1276 / 107)).